The sequence spans 490 residues: Bifunctional protein HldE (490 aa).

Residues 1 to 330 (MFSFDALLQA…RRILPHASLA (330 aa)) are ribokinase. 205–208 (NRKE) is a binding site for ATP. Residue aspartate 275 is part of the active site. Residues 358–490 (FTNGCFDILH…LVARAREGQS (133 aa)) form a cytidylyltransferase region.

It in the N-terminal section; belongs to the carbohydrate kinase PfkB family. This sequence in the C-terminal section; belongs to the cytidylyltransferase family. As to quaternary structure, homodimer.

The enzyme catalyses D-glycero-beta-D-manno-heptose 7-phosphate + ATP = D-glycero-beta-D-manno-heptose 1,7-bisphosphate + ADP + H(+). The catalysed reaction is D-glycero-beta-D-manno-heptose 1-phosphate + ATP + H(+) = ADP-D-glycero-beta-D-manno-heptose + diphosphate. It participates in nucleotide-sugar biosynthesis; ADP-L-glycero-beta-D-manno-heptose biosynthesis; ADP-L-glycero-beta-D-manno-heptose from D-glycero-beta-D-manno-heptose 7-phosphate: step 1/4. Its pathway is nucleotide-sugar biosynthesis; ADP-L-glycero-beta-D-manno-heptose biosynthesis; ADP-L-glycero-beta-D-manno-heptose from D-glycero-beta-D-manno-heptose 7-phosphate: step 3/4. In terms of biological role, catalyzes the phosphorylation of D-glycero-D-manno-heptose 7-phosphate at the C-1 position to selectively form D-glycero-beta-D-manno-heptose-1,7-bisphosphate. Its function is as follows. Catalyzes the ADP transfer from ATP to D-glycero-beta-D-manno-heptose 1-phosphate, yielding ADP-D-glycero-beta-D-manno-heptose. This Rhodopseudomonas palustris (strain ATCC BAA-98 / CGA009) protein is Bifunctional protein HldE.